The sequence spans 67 residues: MNTTELRQKDVDGLKAEVKELQKAHFGLRMQKATQQLTNTSTLRSTRRAIARAKTILAETIVKQGAK.

The protein belongs to the universal ribosomal protein uL29 family.

The polypeptide is Large ribosomal subunit protein uL29 (Polaromonas naphthalenivorans (strain CJ2)).